The sequence spans 341 residues: MITPQEALTRCIEHREIFHDEMLHLMRQIMQGQISPVMAAAILTGLRVKKETIGEISAAAQVMREFANKVPVADRENFVDIVGTGGDGSHTFNISTASMFVAAAAGAKIAKHGNRGVSSKSGSADVLEALGVNIMLTPEQVGQCIEETGIGFMFAPTHHPAMKNVAPIRKEMGVRTIFNILGPLTNPADAPNILMGVFHPDLVGIQVRVMQRLGAKHAIVVYGKDGMDEVSLGAATLVGELKDGEVREYEIHPEDFGLQMISNRGLKVADATESKEMLLEALTNVPGTPREIVSLNAGTALYAANVADSVEDGIRRAREAIASGAAQEKLDQFVRATQQFK.

5-phospho-alpha-D-ribose 1-diphosphate-binding positions include glycine 83, 86–87 (GD), threonine 91, 93–96 (NIST), 111–119 (KHGNRGVSS), and serine 123. Glycine 83 contributes to the anthranilate binding site. Mg(2+) is bound at residue serine 95. Asparagine 114 is a binding site for anthranilate. Arginine 169 provides a ligand contact to anthranilate. Residues aspartate 228 and glutamate 229 each contribute to the Mg(2+) site.

It belongs to the anthranilate phosphoribosyltransferase family. In terms of assembly, homodimer. Requires Mg(2+) as cofactor.

The enzyme catalyses N-(5-phospho-beta-D-ribosyl)anthranilate + diphosphate = 5-phospho-alpha-D-ribose 1-diphosphate + anthranilate. It participates in amino-acid biosynthesis; L-tryptophan biosynthesis; L-tryptophan from chorismate: step 2/5. Functionally, catalyzes the transfer of the phosphoribosyl group of 5-phosphorylribose-1-pyrophosphate (PRPP) to anthranilate to yield N-(5'-phosphoribosyl)-anthranilate (PRA). In Cupriavidus necator (strain ATCC 17699 / DSM 428 / KCTC 22496 / NCIMB 10442 / H16 / Stanier 337) (Ralstonia eutropha), this protein is Anthranilate phosphoribosyltransferase.